Consider the following 332-residue polypeptide: Glycerol-3-phosphate dehydrogenase [NAD(P)+] (332 aa).

Residues Ser-11, Phe-12, Lys-32, and Lys-106 each contribute to the NADPH site. 3 residues coordinate sn-glycerol 3-phosphate: Lys-106, Gly-137, and Ser-139. Position 141 (Ala-141) interacts with NADPH. Lys-192, Asp-245, Ser-255, Arg-256, and Asn-257 together coordinate sn-glycerol 3-phosphate. The active-site Proton acceptor is the Lys-192. Arg-256 provides a ligand contact to NADPH. Residues Val-280 and Glu-282 each contribute to the NADPH site.

The protein belongs to the NAD-dependent glycerol-3-phosphate dehydrogenase family.

Its subcellular location is the cytoplasm. It carries out the reaction sn-glycerol 3-phosphate + NAD(+) = dihydroxyacetone phosphate + NADH + H(+). The enzyme catalyses sn-glycerol 3-phosphate + NADP(+) = dihydroxyacetone phosphate + NADPH + H(+). It participates in membrane lipid metabolism; glycerophospholipid metabolism. In terms of biological role, catalyzes the reduction of the glycolytic intermediate dihydroxyacetone phosphate (DHAP) to sn-glycerol 3-phosphate (G3P), the key precursor for phospholipid synthesis. In Staphylococcus haemolyticus (strain JCSC1435), this protein is Glycerol-3-phosphate dehydrogenase [NAD(P)+].